Consider the following 453-residue polypeptide: Vacuolar cation/proton exchanger 1b (453 aa).

Residues 1-67 (MPVSRMMMES…LRSLLANLND (67 aa)) are Cytoplasmic-facing. A helical transmembrane segment spans residues 68 to 85 (VLLTTRLFLLFPAVLLAI). Over 86 to 91 (AATYLH) the chain is Extracellular. The chain crosses the membrane as a helical span at residues 92–109 (FGQVWVFVLSLIGLVPLA). Residues 110 to 126 (ERLSFLTEQIAFYTGPT) are Cytoplasmic-facing. Residues 127–147 (VGGLLNATFGNVTEVIIALLA) traverse the membrane as a helical segment. Residues 136–171 (GNVTEVIIALLALREGKIEVVKCSLLGSILSNLLLV) are cation selection. Over 148 to 160 (LREGKIEVVKCSL) the chain is Extracellular. A helical membrane pass occupies residues 161–181 (LGSILSNLLLVLGTSLFLAGI). Topologically, residues 182–194 (ANLRAHQPYDTKQ) are cytoplasmic. The chain crosses the membrane as a helical span at residues 195-215 (AHVNTALLMLAVLCHSLPLML). At 216 to 232 (RYAVTSGDHAIVSGDAA) the chain is on the extracellular side. The chain crosses the membrane as a helical span at residues 233-253 (LHLSRACSILMLIAYLAYLFF). At 254-283 (QLNTHRQLFEPQQVEDDDDDDLVIAQDDEP) the chain is on the cytoplasmic side. Residues 284–304 (VLGFSSAMIWLALMTLLTALL) traverse the membrane as a helical segment. Over 305–327 (SGYVVSTIEAASESWELSVSFIS) the chain is Extracellular. A helical membrane pass occupies residues 328-348 (IILLPIVGNAAEHAGAVIFAL). A cation selection region spans residues 335–370 (GNAAEHAGAVIFALKNKMDITLGVSLGSATQISMFV). Over 349 to 364 (KNKMDITLGVSLGSAT) the chain is Cytoplasmic. The chain crosses the membrane as a helical span at residues 365–385 (QISMFVVPVSVIVAWTMGIPM). The Extracellular portion of the chain corresponds to 386–388 (DLD). The chain crosses the membrane as a helical span at residues 389–409 (FNLLETGSLFLAILVTAFTLQ). Topologically, residues 410–414 (EGESH) are cytoplasmic. The chain crosses the membrane as a helical span at residues 415–435 (YLKGLILVLCYAVISVCFFVI). Topologically, residues 436–453 (RRRSAGGTDGVHHLDVIV) are extracellular.

Belongs to the Ca(2+):cation antiporter (CaCA) (TC 2.A.19) family. Cation/proton exchanger (CAX) subfamily. As to expression, expressed in embryo and roots.

It localises to the vacuole membrane. In terms of biological role, vacuolar cation/proton exchanger (CAX). Translocates Ca(2+) and other metal ions into vacuoles using the proton gradient formed by H(+)-ATPase and H(+)-pyrophosphatase. This chain is Vacuolar cation/proton exchanger 1b (CAX1b), found in Oryza sativa subsp. japonica (Rice).